We begin with the raw amino-acid sequence, 465 residues long: MAP kinase-interacting serine/threonine-protein kinase 1 (465 aa).

Positions 1 to 11 (MVSSQKLEKPI) are enriched in basic and acidic residues. The segment at 1–40 (MVSSQKLEKPIEMGSSEPLPIADGDRRRKKKRRGRATDSL) is disordered. At S39 the chain carries Phosphoserine. The Protein kinase domain occupies 49 to 374 (KLTSELLGEG…AAQVLQHPWV (326 aa)). ATP is bound by residues 55-63 (LGEGAYAKV) and K78. Residues 185-203 (APTSLGSSDPPTSASQVAG) are compositionally biased toward polar residues. Positions 185-204 (APTSLGSSDPPTSASQVAGT) are disordered. The Proton acceptor role is filled by D211. Phosphoserine occurs at positions 221 and 226. A phosphothreonine mark is found at T250, T255, and T385. Residues 446 to 465 (RRRALAQAGRGEDRSPPTAL) form a disordered region. Residues 455–465 (RGEDRSPPTAL) show a composition bias toward basic and acidic residues. S460 carries the phosphoserine modification.

The protein belongs to the protein kinase superfamily. CAMK Ser/Thr protein kinase family. In terms of assembly, interacts with the C-terminal regions of EIF4G1 and EIF4G2. Also binds to dephosphorylated ERK1 and ERK2, and to the p38 kinases. It depends on Mg(2+) as a cofactor. Post-translationally, dual phosphorylation of Thr-250 and Thr-255 activates the kinase. Phosphorylation of Thr-385 activates the kinase. MAPK3/ERK1 is one of the kinases which activate MKNK1/MNK1. Phosphorylation by PAK2 leads to a reduced phosphorylation of EIF4G1. In terms of tissue distribution, ubiquitous.

It is found in the cytoplasm. It localises to the nucleus. It carries out the reaction L-seryl-[protein] + ATP = O-phospho-L-seryl-[protein] + ADP + H(+). The enzyme catalyses L-threonyl-[protein] + ATP = O-phospho-L-threonyl-[protein] + ADP + H(+). Phosphorylated and activated by the p38 kinases and kinases in the Erk pathway. Functionally, may play a role in the response to environmental stress and cytokines. Appears to regulate translation by phosphorylating EIF4E, thus increasing the affinity of this protein for the 7-methylguanosine-containing mRNA cap. The chain is MAP kinase-interacting serine/threonine-protein kinase 1 (MKNK1) from Homo sapiens (Human).